A 481-amino-acid chain; its full sequence is Aspartyl/glutamyl-tRNA(Asn/Gln) amidotransferase subunit B (481 aa).

Belongs to the GatB/GatE family. GatB subfamily. As to quaternary structure, heterotrimer of A, B and C subunits.

The catalysed reaction is L-glutamyl-tRNA(Gln) + L-glutamine + ATP + H2O = L-glutaminyl-tRNA(Gln) + L-glutamate + ADP + phosphate + H(+). It carries out the reaction L-aspartyl-tRNA(Asn) + L-glutamine + ATP + H2O = L-asparaginyl-tRNA(Asn) + L-glutamate + ADP + phosphate + 2 H(+). Functionally, allows the formation of correctly charged Asn-tRNA(Asn) or Gln-tRNA(Gln) through the transamidation of misacylated Asp-tRNA(Asn) or Glu-tRNA(Gln) in organisms which lack either or both of asparaginyl-tRNA or glutaminyl-tRNA synthetases. The reaction takes place in the presence of glutamine and ATP through an activated phospho-Asp-tRNA(Asn) or phospho-Glu-tRNA(Gln). In Marinomonas sp. (strain MWYL1), this protein is Aspartyl/glutamyl-tRNA(Asn/Gln) amidotransferase subunit B.